The sequence spans 577 residues: Cleavage stimulation factor subunit 2 (577 aa).

A Phosphoserine modification is found at Ser14. One can recognise an RRM domain in the interval 16 to 94; it reads RSVFVGNIPY…RALRVDNAAS (79 aa). Residues 108–248 form an interactions with CSTF3 and SYMPK region; the sequence is APVIESPYGE…VNGAPPLMQA (141 aa). A Glycyl lysine isopeptide (Lys-Gly) (interchain with G-Cter in SUMO2) cross-link involves residue Lys189. The tract at residues 206 to 243 is disordered; that stretch reads QPVHGAGPGSGSNVSMNQQNPQAPQAQSLGGMHVNGAP. Residues 222 to 232 show a composition bias toward low complexity; sequence NQQNPQAPQAQ. Arg308 carries the post-translational modification Omega-N-methylarginine. The segment at 340-409 is disordered; sequence EVEPRGYLGP…DGRGGRDPRG (70 aa). Over residues 360-373 the composition is skewed to basic and acidic residues; sequence PGHESRGPPPHELR. One copy of the 1; approximate repeat lies at 410-414; the sequence is IDARG. The interval 410–469 is 12 X 5 AA tandem repeats of M-E-A-R-[AG]; the sequence is IDARGMEARAMEARGLDARGLEARAMEARAMEARAMEARAMEARAMEVRGMEARGMDTRG. 2 repeat units span residues 415 to 419 and 420 to 424. The 4; approximate repeat unit spans residues 425–429; it reads LDARG. The stretch at 430-434 is one 5; approximate repeat; sequence LEARA. Repeat copies occupy residues 435-439, 440-444, 445-449, and 450-454. The 10; approximate repeat unit spans residues 455–459; sequence MEVRG. Repeat unit 11 spans residues 460–464; the sequence is MEARG. One copy of the 12; approximate repeat lies at 465–469; that stretch reads MDTRG. Omega-N-methylarginine is present on residues Arg468 and Arg475. The interval 508-532 is disordered; the sequence is GMQGASIQGGSQPGGFSPGQNQVTP. The interval 514–577 is interaction with RPO2TC1; it reads IQGGSQPGGF…EQIQKSTGAP (64 aa). Phosphoserine is present on residues Ser518 and Ser524.

As to quaternary structure, the CSTF complex is composed of CSTF1 (50 kDa subunit), CSTF2 (64 kDa subunit) and CSTF3 (77 kDa subunit). CSTF2 directly interacts with CSTF3, SYMPK and RPO2TC1. Interacts with HSF1 in heat-stressed cells. Interacts with CPSF2, CPSF3 and FIP1L1. Interacts with DDX1.

It is found in the nucleus. Functionally, one of the multiple factors required for polyadenylation and 3'-end cleavage of mammalian pre-mRNAs. This subunit is directly involved in the binding to pre-mRNAs. This is Cleavage stimulation factor subunit 2 (CSTF2) from Homo sapiens (Human).